The primary structure comprises 544 residues: Bacillolysin (544 aa).

A signal peptide spans 1–25; sequence MNKRAMLGAIGLAFGLMAWPFGASA. Residues 26 to 225 constitute a propeptide, activation peptide; sequence KGKSMVWNEQ…DEAKPGGAQP (200 aa). Aspartate 285, aspartate 287, glutamine 289, and aspartate 366 together coordinate Ca(2+). A Zn(2+)-binding site is contributed by histidine 370. Glutamate 371 is a catalytic residue. Residues histidine 374 and glutamate 394 each coordinate Zn(2+). Positions 405, 411, 413, 415, 418, 421, 422, 425, and 428 each coordinate Ca(2+). The active-site Proton donor is the histidine 459.

The protein belongs to the peptidase M4 family. It depends on Ca(2+) as a cofactor. Zn(2+) is required as a cofactor.

It localises to the secreted. The catalysed reaction is Similar, but not identical, to that of thermolysin.. Functionally, extracellular zinc metalloprotease. The sequence is that of Bacillolysin (npr) from Bacillus caldolyticus.